A 214-amino-acid polypeptide reads, in one-letter code: MQDMRLQGLYGISESGWYKRPHEAIELLLEAIEGGMKIFQLREKEGSDEEILPLARALWNHCRQKGVLFILNDRLDLALSLGVDGVHLGIDDAEASRARILLPHGIIGISCYGDLDRAHKAKEEGASYVAFGSCFPSPTKPASSVIDLTLFKKAQEELAIPLCAIGGIEAQNVGELIHCDMIAVISSLWSGGVAQVRKNAKGLIQSWRENRERV.

Residues 40-44 (QLREK) and N72 each bind 4-amino-2-methyl-5-(diphosphooxymethyl)pyrimidine. Residues D73 and D92 each contribute to the Mg(2+) site. S110 provides a ligand contact to 4-amino-2-methyl-5-(diphosphooxymethyl)pyrimidine. A 2-[(2R,5Z)-2-carboxy-4-methylthiazol-5(2H)-ylidene]ethyl phosphate-binding site is contributed by 137–139 (SPT). K140 serves as a coordination point for 4-amino-2-methyl-5-(diphosphooxymethyl)pyrimidine. 2-[(2R,5Z)-2-carboxy-4-methylthiazol-5(2H)-ylidene]ethyl phosphate-binding positions include G167 and 185–186 (IS).

The protein belongs to the thiamine-phosphate synthase family. It depends on Mg(2+) as a cofactor.

The catalysed reaction is 2-[(2R,5Z)-2-carboxy-4-methylthiazol-5(2H)-ylidene]ethyl phosphate + 4-amino-2-methyl-5-(diphosphooxymethyl)pyrimidine + 2 H(+) = thiamine phosphate + CO2 + diphosphate. It carries out the reaction 2-(2-carboxy-4-methylthiazol-5-yl)ethyl phosphate + 4-amino-2-methyl-5-(diphosphooxymethyl)pyrimidine + 2 H(+) = thiamine phosphate + CO2 + diphosphate. It catalyses the reaction 4-methyl-5-(2-phosphooxyethyl)-thiazole + 4-amino-2-methyl-5-(diphosphooxymethyl)pyrimidine + H(+) = thiamine phosphate + diphosphate. It participates in cofactor biosynthesis; thiamine diphosphate biosynthesis; thiamine phosphate from 4-amino-2-methyl-5-diphosphomethylpyrimidine and 4-methyl-5-(2-phosphoethyl)-thiazole: step 1/1. Condenses 4-methyl-5-(beta-hydroxyethyl)thiazole monophosphate (THZ-P) and 2-methyl-4-amino-5-hydroxymethyl pyrimidine pyrophosphate (HMP-PP) to form thiamine monophosphate (TMP). The polypeptide is Thiamine-phosphate synthase (Wolinella succinogenes (strain ATCC 29543 / DSM 1740 / CCUG 13145 / JCM 31913 / LMG 7466 / NCTC 11488 / FDC 602W) (Vibrio succinogenes)).